The chain runs to 366 residues: Ribosomal RNA large subunit methyltransferase M (366 aa).

Residues serine 188, 221-224 (CPGG), aspartate 240, aspartate 260, and aspartate 277 each bind S-adenosyl-L-methionine. Residue lysine 306 is the Proton acceptor of the active site.

The protein belongs to the class I-like SAM-binding methyltransferase superfamily. RNA methyltransferase RlmE family. RlmM subfamily. As to quaternary structure, monomer.

It is found in the cytoplasm. The enzyme catalyses cytidine(2498) in 23S rRNA + S-adenosyl-L-methionine = 2'-O-methylcytidine(2498) in 23S rRNA + S-adenosyl-L-homocysteine + H(+). Its function is as follows. Catalyzes the 2'-O-methylation at nucleotide C2498 in 23S rRNA. The protein is Ribosomal RNA large subunit methyltransferase M of Shigella flexneri serotype 5b (strain 8401).